The primary structure comprises 548 residues: Chaperonin GroEL (548 aa).

ATP-binding positions include 30–33 (TLGP), lysine 51, 87–91 (DGTTT), glycine 415, 479–481 (NAA), and aspartate 495.

It belongs to the chaperonin (HSP60) family. Forms a cylinder of 14 subunits composed of two heptameric rings stacked back-to-back. Interacts with the co-chaperonin GroES.

The protein localises to the cytoplasm. The enzyme catalyses ATP + H2O + a folded polypeptide = ADP + phosphate + an unfolded polypeptide.. Together with its co-chaperonin GroES, plays an essential role in assisting protein folding. The GroEL-GroES system forms a nano-cage that allows encapsulation of the non-native substrate proteins and provides a physical environment optimized to promote and accelerate protein folding. This Klebsiella pneumoniae subsp. pneumoniae (strain ATCC 700721 / MGH 78578) protein is Chaperonin GroEL.